The sequence spans 368 residues: Trans-enoyl reductase thnE (368 aa).

53–56 (VDVK) provides a ligand contact to NADP(+). 140 to 147 (LATATAAY) is a substrate binding site. NADP(+) is bound by residues 179-182 (STAT), 202-205 (SPSN), Tyr220, and 267-268 (VE). Residue 289 to 293 (VMTVW) coordinates substrate. An NADP(+)-binding site is contributed by 358-359 (PS).

It belongs to the zinc-containing alcohol dehydrogenase family. Monomer.

It carries out the reaction malate + 6 malonyl-CoA + acetyl-CoA + 2 AH2 + 2 S-adenosyl-L-methionine + 5 NADPH + 9 H(+) = trihazone A + 2 A + 2 S-adenosyl-L-homocysteine + 6 CO2 + 5 NADP(+) + 7 CoA + 6 H2O. The protein operates within secondary metabolite biosynthesis. Its function is as follows. Trans-enoyl reductase; part of the gene cluster that produces the tetronate natural products trihazones. The PKS-NRPS synthetase thnA with the help of the trans-enoyl reductase thnE are responsible for the synthesis of the carboxylmethyl containing trihazone A. The PKS portion of thnA synthesizes beta-keto-triene chain from one acetyl-CoA and 6 equivalents of malonyl-CoA, in collaboration with thnE, which selectively reduces the enoyl intermediate during the first and fourth iteration of the PKS. The NRPS domain selects and activates malate, of which the alpha-hydroxyl group attacks the completed polyketide acyl-S-ACP chain to form the ester product. Intramolecular Dieckmann cyclization catalyzed by the terminal reductase domain releases the product as trihazone A from the PKS-NPRS. The pathway begins with the formation of trihazone A by the hybrid PKS-NRPS synthetase thnA and the trans-enoyl reductase thnE. Trihazone A is further decarboxylated by the 2-oxoglutarate-dependent dioxygenase thnC to produce trihazone D. The function of the FAD-dependent monooxygenase thnD has still to be identified. In Trichoderma harzianum (Hypocrea lixii), this protein is Trans-enoyl reductase thnE.